The chain runs to 652 residues: DNA ligase (652 aa).

Residues 29–33 (DSDYD), 78–79 (SL), and glutamate 107 contribute to the NAD(+) site. Lysine 109 acts as the N6-AMP-lysine intermediate in catalysis. NAD(+)-binding residues include arginine 130, glutamate 164, lysine 278, and lysine 302. Residues cysteine 395, cysteine 398, cysteine 413, and cysteine 418 each contribute to the Zn(2+) site. In terms of domain architecture, BRCT spans 577–652 (NSDAALFGLT…IEDEDWLRKL (76 aa)).

The protein belongs to the NAD-dependent DNA ligase family. LigA subfamily. The cofactor is Mg(2+). It depends on Mn(2+) as a cofactor.

It carries out the reaction NAD(+) + (deoxyribonucleotide)n-3'-hydroxyl + 5'-phospho-(deoxyribonucleotide)m = (deoxyribonucleotide)n+m + AMP + beta-nicotinamide D-nucleotide.. DNA ligase that catalyzes the formation of phosphodiester linkages between 5'-phosphoryl and 3'-hydroxyl groups in double-stranded DNA using NAD as a coenzyme and as the energy source for the reaction. It is essential for DNA replication and repair of damaged DNA. The polypeptide is DNA ligase (Streptococcus pyogenes serotype M18 (strain MGAS8232)).